The primary structure comprises 302 residues: Nucleotide-binding protein Bcep18194_A6125 (302 aa).

Residue 8-15 (GISGSGKS) participates in ATP binding. 57–60 (DARS) is a GTP binding site.

It belongs to the RapZ-like family.

Functionally, displays ATPase and GTPase activities. The sequence is that of Nucleotide-binding protein Bcep18194_A6125 from Burkholderia lata (strain ATCC 17760 / DSM 23089 / LMG 22485 / NCIMB 9086 / R18194 / 383).